A 628-amino-acid polypeptide reads, in one-letter code: Pinene synthase, chloroplastic (628 aa).

Residues 1-36 (MALVSTAPLASKSCLHKSLISSTHELKALSRTIPAL) constitute a chloroplast transit peptide. Mg(2+) contacts are provided by Asp-379, Asp-383, and Asp-531. The DDXXD motif motif lies at 379–383 (DDMYD).

Belongs to the terpene synthase family. Tpsd subfamily. Mg(2+) is required as a cofactor. Requires Mn(2+) as cofactor. It depends on K(+) as a cofactor.

The protein localises to the plastid. Its subcellular location is the chloroplast. It catalyses the reaction (2E)-geranyl diphosphate = (1S,5S)-alpha-pinene + diphosphate. The catalysed reaction is (2E)-geranyl diphosphate = (1S,5S)-beta-pinene + diphosphate. Its pathway is terpene metabolism; oleoresin biosynthesis. Functionally, involved in defensive oleoresin formation in conifers in response to insect attack or other injury. Involved in monoterpene (C10) olefins biosynthesis. A mixture of alpha- and beta-pinene is produced by this enzyme. In Abies grandis (Grand fir), this protein is Pinene synthase, chloroplastic (ag3).